The sequence spans 776 residues: Hepatocyte growth factor-regulated tyrosine kinase substrate (776 aa).

A VHS domain is found at 15-143 (ATSQLLLETD…IMKVEGHVFP (129 aa)). The FYVE-type zinc-finger motif lies at 160–220 (WVDAEECHRC…VCEPCYEQLN (61 aa)). Cys-166, Cys-169, Cys-182, Cys-185, Cys-190, and Cys-193 together coordinate Zn(2+). Lys-207 carries the N6-acetyllysine modification. Zn(2+) is bound by residues Cys-212 and Cys-215. Residue Tyr-216 is modified to Phosphotyrosine. A disordered region spans residues 223-319 (AEGKAASTTE…SPVNSSAPLA (97 aa)). An interaction with SNX1 region spans residues 225–542 (GKAASTTELP…QRLQEQEKER (318 aa)). The region spanning 258–277 (QEEEELQLALALSQSEAEEK) is the UIM domain. A compositionally biased stretch (low complexity) spans 294 to 311 (PAPLASSAPPAGSLYSSP). Tyr-308, Tyr-329, and Tyr-334 each carry phosphotyrosine. The tract at residues 338 to 401 (KQEEARKSPT…SEQYQNGESE (64 aa)) is disordered. Polar residues predominate over residues 379–398 (TDSQPITSCSGPFSEQYQNG). The interval 444–542 (SINSTHPQLL…QRLQEQEKER (99 aa)) is interaction with SNAP25 and TRAK2. Residues 453 to 571 (LELLNRLDER…FPLPYAQLQA (119 aa)) are interaction with STAM. The tract at residues 479-776 (ARGALSALRE…GNETQLISFD (298 aa)) is interaction with NF2. The residue at position 550 (Lys-550) is an N6-succinyllysine. The segment at 719–776 (GQDASLPAQQPYITGQQPMYQQMAPSTGPPQQQPPVAQPPPTQGPPAQGNETQLISFD) is disordered. The segment covering 725–743 (PAQQPYITGQQPMYQQMAP) has biased composition (polar residues). The span at 745-762 (TGPPQQQPPVAQPPPTQG) shows a compositional bias: pro residues. The span at 767–776 (GNETQLISFD) shows a compositional bias: polar residues.

Component of the ESCRT-0 complex composed of STAM or STAM2 and HGS. Part of a complex at least composed of HSG, STAM2 (or probably STAM) and EPS15. Interacts with STAM. Interacts with STAM2. Interacts with EPS15; the interaction is direct, calcium-dependent and inhibited by SNAP25. Identified in a complex with STAM and LITAF. Found in a complex with STAM and E3 ligase ITCH and DTX3L. Interacts with E3 ligase DTX3L; the interaction brings together STAM and HSG, promotes their recruitment to early endosomes and decreases STAM and HGS ubiquitination by ITCH. Interacts with NF2; the interaction is direct. Interacts with ubiquitin; the interaction is direct. Interacts with VPS37C. Interacts with SMAD1, SMAD2 and SMAD3. Interacts with TSG101; the interaction mediates the association with the ESCRT-I complex. Interacts with SNAP25; the interaction is direct and decreases with addition of increasing concentrations of free calcium. Interacts with SNX1; the interaction is direct. Component of a 550 kDa membrane complex at least composed of HGS and SNX1 but excluding EGFR. Interacts with TRAK2. Interacts with TRAK1. Component of the CART complex, at least composed of ACTN4, HGS/HRS, MYO5B and TRIM3. Interacts (via UIM domain) with UBQLN1 (via ubiquitin-like domain). Interacts with ARRDC3. Identified in a complex containing at least ARRDC4, AVPR2 and HGS. Interacts with LAPTM4B; promotes HGS ubiquitination. Post-translationally, phosphorylated on Tyr-334. This phosphorylation occurs in response to EGF. A minor site of phosphorylation on Tyr-329 is detected. Protein phosphorylation may also be triggered in response to IL-2, GM-CSF and HGF. In terms of processing, ubiquitinated by ITCH. In terms of tissue distribution, ubiquitously expressed.

Its subcellular location is the cytoplasm. It is found in the early endosome membrane. The protein localises to the endosome. The protein resides in the multivesicular body membrane. In terms of biological role, involved in intracellular signal transduction mediated by cytokines and growth factors. When associated with STAM, it suppresses DNA signaling upon stimulation by IL-2 and GM-CSF. Could be a direct effector of PI3-kinase in vesicular pathway via early endosomes and may regulate trafficking to early and late endosomes by recruiting clathrin. May concentrate ubiquitinated receptors within clathrin-coated regions. Involved in down-regulation of receptor tyrosine kinase via multivesicular body (MVBs) when complexed with STAM (ESCRT-0 complex). The ESCRT-0 complex binds ubiquitin and acts as a sorting machinery that recognizes ubiquitinated receptors and transfers them to further sequential lysosomal sorting/trafficking processes. Involved in receptor recycling via its association with the CART complex, a multiprotein complex required for efficient transferrin receptor recycling but not for EGFR degradation. May contribute to the efficient recruitment of SMADs to the activin receptor complex. In Rattus norvegicus (Rat), this protein is Hepatocyte growth factor-regulated tyrosine kinase substrate (Hgs).